A 373-amino-acid chain; its full sequence is L-threonine 3-dehydrogenase, mitochondrial (373 aa).

NAD(+)-binding positions include 62 to 67, 88 to 90, 106 to 107, tyrosine 195, lysine 199, and isoleucine 225; these read GGLGQL, DIR, and DI. The Proton donor/acceptor role is filled by tyrosine 195.

Belongs to the NAD(P)-dependent epimerase/dehydratase family. As to quaternary structure, homodimer.

It localises to the mitochondrion. It catalyses the reaction L-threonine + NAD(+) = (2S)-2-amino-3-oxobutanoate + NADH + H(+). The protein operates within amino-acid degradation; L-threonine degradation via oxydo-reductase pathway; glycine from L-threonine: step 1/2. Catalyzes the NAD(+)-dependent oxidation of L-threonine to 2-amino-3-ketobutyrate, mediating L-threonine catabolism. The protein is L-threonine 3-dehydrogenase, mitochondrial of Bos taurus (Bovine).